The primary structure comprises 133 residues: Putative dispanin subfamily A member 2d (133 aa).

The Extracellular segment spans residues 1-57 (MNHTVQTFFSPVNSGQPPNYEMLKEEHKVAVLGVPHNPAPPTSTVIHIRSKTSVPHH). A Glycyl lysine isopeptide (Lys-Gly) (interchain with G-Cter in ubiquitin) cross-link involves residue Lys-24. Residues 58–78 (VVWSLFNTLFMNPCCLGFIAF) traverse the membrane as a helical segment. The Cytoplasmic portion of the chain corresponds to 79–107 (AYSVKSRDRKMVGNVTGAQAYASTTKCLN). Glycyl lysine isopeptide (Lys-Gly) (interchain with G-Cter in ubiquitin) cross-links involve residues Lys-83, Lys-88, and Lys-104. The chain crosses the membrane as a helical span at residues 108–128 (IWALILGILMTILLIIIPVLI). The Extracellular portion of the chain corresponds to 129–133 (FQAHR).

It belongs to the CD225/Dispanin family.

The protein resides in the membrane. The protein is Putative dispanin subfamily A member 2d of Homo sapiens (Human).